A 147-amino-acid polypeptide reads, in one-letter code: Hemoglobin subunit beta (147 aa).

Val2 is subject to N-acetylvaline. Positions 3 to 147 (HLTAEEKSAV…VANALAHKYH (145 aa)) constitute a Globin domain. Thr13 bears the Phosphothreonine mark. The residue at position 45 (Ser45) is a Phosphoserine. Lys60 carries the N6-acetyllysine modification. Position 64 (His64) interacts with heme b. Lys83 is modified (N6-acetyllysine). Residue His93 participates in heme b binding. Cys94 carries the post-translational modification S-nitrosocysteine. Lys145 is modified (N6-acetyllysine).

It belongs to the globin family. In terms of assembly, heterotetramer of two alpha chains and two beta chains. In terms of tissue distribution, red blood cells.

Its function is as follows. Involved in oxygen transport from the lung to the various peripheral tissues. This Sapajus apella (Brown-capped capuchin) protein is Hemoglobin subunit beta (HBB).